The sequence spans 404 residues: S-adenosylmethionine synthase (404 aa).

139 to 144 (GKGSTD) is an ATP binding site.

This sequence belongs to the AdoMet synthase 2 family. Mg(2+) is required as a cofactor.

It carries out the reaction L-methionine + ATP + H2O = S-adenosyl-L-methionine + phosphate + diphosphate. It functions in the pathway amino-acid biosynthesis; S-adenosyl-L-methionine biosynthesis; S-adenosyl-L-methionine from L-methionine: step 1/1. Catalyzes the formation of S-adenosylmethionine from methionine and ATP. The protein is S-adenosylmethionine synthase of Saccharolobus islandicus (strain L.S.2.15 / Lassen #1) (Sulfolobus islandicus).